The chain runs to 280 residues: Nucleotide-binding protein Swoo_4243 (280 aa).

An ATP-binding site is contributed by 8–15 (GRSGSGKS). A GTP-binding site is contributed by 56 to 59 (DVRN).

This sequence belongs to the RapZ-like family.

In terms of biological role, displays ATPase and GTPase activities. The chain is Nucleotide-binding protein Swoo_4243 from Shewanella woodyi (strain ATCC 51908 / MS32).